Reading from the N-terminus, the 88-residue chain is Small ribosomal subunit protein uS17 (88 aa).

The protein belongs to the universal ribosomal protein uS17 family. Part of the 30S ribosomal subunit.

In terms of biological role, one of the primary rRNA binding proteins, it binds specifically to the 5'-end of 16S ribosomal RNA. The sequence is that of Small ribosomal subunit protein uS17 from Teredinibacter turnerae (strain ATCC 39867 / T7901).